Reading from the N-terminus, the 265-residue chain is Protein Exd1 homolog (265 aa).

Residues 32 to 82 (EKQLDRIVLIYQVDTTYHSALKDIKDQKIISLLVEPSFYGRHHPTSILVVA) enclose the 3'-5' exonuclease domain.

The protein belongs to the EXD1 family. As to quaternary structure, homodimer.

RNA-binding protein. Inactive exonuclease. This Drosophila melanogaster (Fruit fly) protein is Protein Exd1 homolog.